Consider the following 97-residue polypeptide: Aspartyl/glutamyl-tRNA(Asn/Gln) amidotransferase subunit C (97 aa).

It belongs to the GatC family. In terms of assembly, heterotrimer of A, B and C subunits.

It carries out the reaction L-glutamyl-tRNA(Gln) + L-glutamine + ATP + H2O = L-glutaminyl-tRNA(Gln) + L-glutamate + ADP + phosphate + H(+). It catalyses the reaction L-aspartyl-tRNA(Asn) + L-glutamine + ATP + H2O = L-asparaginyl-tRNA(Asn) + L-glutamate + ADP + phosphate + 2 H(+). Allows the formation of correctly charged Asn-tRNA(Asn) or Gln-tRNA(Gln) through the transamidation of misacylated Asp-tRNA(Asn) or Glu-tRNA(Gln) in organisms which lack either or both of asparaginyl-tRNA or glutaminyl-tRNA synthetases. The reaction takes place in the presence of glutamine and ATP through an activated phospho-Asp-tRNA(Asn) or phospho-Glu-tRNA(Gln). This is Aspartyl/glutamyl-tRNA(Asn/Gln) amidotransferase subunit C from Clostridium botulinum (strain Eklund 17B / Type B).